The primary structure comprises 427 residues: N-myc proto-oncogene protein (427 aa).

Disordered regions lie at residues 45–79, 144–173, 195–255, and 297–349; these read FELL…SVGL, EKLQ…SGRA, AAEG…STNK, and APSP…RNHN. Pro residues-rich tracts occupy residues 49-61 and 152-167; these read PTPP…PAPG and AAPP…PPVP. Residues 210 to 221 show a composition bias toward low complexity; it reads RASSSSSSSGDD. The segment covering 222 to 242 has biased composition (acidic residues); that stretch reads TLSDSEDDEDEEEEDEEEEID. 2 positions are modified to phosphoserine; by CK2: Ser-224 and Ser-226. The bHLH domain occupies 343 to 396; it reads ERRRNHNILERQRANDLRSSFLTLRDHVLSELVQNEKAAKVVILKKATEYVHSL. Residues 396 to 417 form a leucine-zipper region; the sequence is LQAEEQKLLLEKEKLQARQEQL.

As to quaternary structure, efficient DNA binding requires dimerization with another bHLH protein. Binds DNA as a heterodimer with MAX.

The protein resides in the nucleus. This is N-myc proto-oncogene protein (MYCN) from Serinus canaria (Island canary).